A 290-amino-acid chain; its full sequence is ATP synthase gamma chain (290 aa).

Belongs to the ATPase gamma chain family. In terms of assembly, F-type ATPases have 2 components, CF(1) - the catalytic core - and CF(0) - the membrane proton channel. CF(1) has five subunits: alpha(3), beta(3), gamma(1), delta(1), epsilon(1). CF(0) has three main subunits: a, b and c.

The protein resides in the cell membrane. Produces ATP from ADP in the presence of a proton gradient across the membrane. The gamma chain is believed to be important in regulating ATPase activity and the flow of protons through the CF(0) complex. The chain is ATP synthase gamma chain from Roseiflexus castenholzii (strain DSM 13941 / HLO8).